A 358-amino-acid polypeptide reads, in one-letter code: Peptide chain release factor 1 (358 aa).

Gln-233 carries the N5-methylglutamine modification.

The protein belongs to the prokaryotic/mitochondrial release factor family. Post-translationally, methylated by PrmC. Methylation increases the termination efficiency of RF1.

It localises to the cytoplasm. Its function is as follows. Peptide chain release factor 1 directs the termination of translation in response to the peptide chain termination codons UAG and UAA. The chain is Peptide chain release factor 1 from Staphylococcus aureus (strain MRSA252).